A 213-amino-acid chain; its full sequence is Pyridoxine/pyridoxamine 5'-phosphate oxidase (213 aa).

FMN-binding positions include 60 to 65 (RMVLMK), 75 to 76 (YS), lysine 82, and glutamine 104. Position 65 (lysine 65) interacts with substrate. Positions 122 and 126 each coordinate substrate. FMN-binding positions include 139 to 140 (QS) and tryptophan 184. 190 to 192 (RLH) lines the substrate pocket. Residue arginine 194 participates in FMN binding.

Belongs to the pyridoxamine 5'-phosphate oxidase family. Homodimer. The cofactor is FMN.

It carries out the reaction pyridoxamine 5'-phosphate + O2 + H2O = pyridoxal 5'-phosphate + H2O2 + NH4(+). The catalysed reaction is pyridoxine 5'-phosphate + O2 = pyridoxal 5'-phosphate + H2O2. The protein operates within cofactor metabolism; pyridoxal 5'-phosphate salvage; pyridoxal 5'-phosphate from pyridoxamine 5'-phosphate: step 1/1. It functions in the pathway cofactor metabolism; pyridoxal 5'-phosphate salvage; pyridoxal 5'-phosphate from pyridoxine 5'-phosphate: step 1/1. In terms of biological role, catalyzes the oxidation of either pyridoxine 5'-phosphate (PNP) or pyridoxamine 5'-phosphate (PMP) into pyridoxal 5'-phosphate (PLP). This Nitrobacter hamburgensis (strain DSM 10229 / NCIMB 13809 / X14) protein is Pyridoxine/pyridoxamine 5'-phosphate oxidase.